Consider the following 491-residue polypeptide: Cobyric acid synthase (491 aa).

Residues 250–441 form the GATase cobBQ-type domain; sequence DLQITVVRLP…LHGLFDNGPW (192 aa). Cys331 (nucleophile) is an active-site residue. His433 is an active-site residue.

Belongs to the CobB/CobQ family. CobQ subfamily.

It participates in cofactor biosynthesis; adenosylcobalamin biosynthesis. Its function is as follows. Catalyzes amidations at positions B, D, E, and G on adenosylcobyrinic A,C-diamide. NH(2) groups are provided by glutamine, and one molecule of ATP is hydrogenolyzed for each amidation. This Trichormus variabilis (strain ATCC 29413 / PCC 7937) (Anabaena variabilis) protein is Cobyric acid synthase.